A 282-amino-acid chain; its full sequence is Undecaprenyl-diphosphatase (282 aa).

The next 7 membrane-spanning stretches (helical) occupy residues 6–26 (LYFV…FIPV), 45–65 (SGKV…MWIF), 85–105 (LFTR…AIFI), 112–132 (FYHP…MLWV), 200–220 (ATEF…VYDM), 230–250 (HDLG…LLVV), and 262–282 (YRGF…WLAF).

Belongs to the UppP family.

Its subcellular location is the cell inner membrane. The enzyme catalyses di-trans,octa-cis-undecaprenyl diphosphate + H2O = di-trans,octa-cis-undecaprenyl phosphate + phosphate + H(+). Its function is as follows. Catalyzes the dephosphorylation of undecaprenyl diphosphate (UPP). Confers resistance to bacitracin. In Bordetella avium (strain 197N), this protein is Undecaprenyl-diphosphatase.